A 74-amino-acid polypeptide reads, in one-letter code: UPF0346 protein BPUM_1890 (74 aa).

The protein belongs to the UPF0346 family.

This is UPF0346 protein BPUM_1890 from Bacillus pumilus (strain SAFR-032).